Here is a 206-residue protein sequence, read N- to C-terminus: Large ribosomal subunit protein uL4 (206 aa).

The disordered stretch occupies residues 48–75; sequence TQSAKTRAEVSGGGIKPWRQKGTGRARQ.

Belongs to the universal ribosomal protein uL4 family. In terms of assembly, part of the 50S ribosomal subunit.

Functionally, one of the primary rRNA binding proteins, this protein initially binds near the 5'-end of the 23S rRNA. It is important during the early stages of 50S assembly. It makes multiple contacts with different domains of the 23S rRNA in the assembled 50S subunit and ribosome. Forms part of the polypeptide exit tunnel. The sequence is that of Large ribosomal subunit protein uL4 from Clostridium botulinum (strain Loch Maree / Type A3).